The primary structure comprises 172 residues: Large ribosomal subunit protein uL10 (172 aa).

This sequence belongs to the universal ribosomal protein uL10 family. In terms of assembly, part of the ribosomal stalk of the 50S ribosomal subunit. The N-terminus interacts with L11 and the large rRNA to form the base of the stalk. The C-terminus forms an elongated spine to which L12 dimers bind in a sequential fashion forming a multimeric L10(L12)X complex.

Forms part of the ribosomal stalk, playing a central role in the interaction of the ribosome with GTP-bound translation factors. The chain is Large ribosomal subunit protein uL10 from Afipia carboxidovorans (strain ATCC 49405 / DSM 1227 / KCTC 32145 / OM5) (Oligotropha carboxidovorans).